The sequence spans 60 residues: MFTLKKSLLLLFFLATINLSLCEQERNAEEERRDDDERNAEVEKRFLPFVGNLLKGLLGK.

An N-terminal signal peptide occupies residues 1–22 (MFTLKKSLLLLFFLATINLSLC). Residues 23–43 (EQERNAEEERRDDDERNAEVE) constitute a propeptide, removed in mature form.

As to expression, expressed by the skin glands.

The protein localises to the secreted. Functionally, antimicrobial peptide active against a variety of Gram-positive and some Gram-negative bacterial strains. Has antifungal activity against a slime mold isolate. Has weak hemolytic activity against human erythrocytes. The protein is Temporin-CG1 of Amolops chunganensis (Chungan torrent frog).